A 152-amino-acid chain; its full sequence is Large ribosomal subunit protein bL9 (152 aa).

It belongs to the bacterial ribosomal protein bL9 family.

Its function is as follows. Binds to the 23S rRNA. This is Large ribosomal subunit protein bL9 from Prochlorococcus marinus (strain NATL2A).